Here is a 441-residue protein sequence, read N- to C-terminus: Glutamate--tRNA ligase 2 (441 aa).

A 'HIGH' region motif is present at residues Pro8–Asn18. The 'KMSKS' region motif lies at Ala239 to Arg243. Lys242 contributes to the ATP binding site.

Belongs to the class-I aminoacyl-tRNA synthetase family. Glutamate--tRNA ligase type 1 subfamily. As to quaternary structure, monomer.

It is found in the cytoplasm. The catalysed reaction is tRNA(Glu) + L-glutamate + ATP = L-glutamyl-tRNA(Glu) + AMP + diphosphate. In terms of biological role, catalyzes the attachment of glutamate to tRNA(Glu) in a two-step reaction: glutamate is first activated by ATP to form Glu-AMP and then transferred to the acceptor end of tRNA(Glu). The polypeptide is Glutamate--tRNA ligase 2 (Ruegeria sp. (strain TM1040) (Silicibacter sp.)).